Consider the following 298-residue polypeptide: ATP synthase F(1) complex subunit gamma, mitochondrial (298 aa).

A mitochondrion-targeting transit peptide spans 1-25 (MFSRASVVGLSACAVQPQWIQVRNM). Position 39 is an N6-acetyllysine (lysine 39). Lysine 49 bears the N6-succinyllysine mark. Lysine 55 carries the post-translational modification N6-acetyllysine. At lysine 115 the chain carries N6-acetyllysine; alternate. Lysine 115 is modified (N6-succinyllysine; alternate). Residue lysine 138 is modified to N6-acetyllysine. At serine 146 the chain carries Phosphoserine. Lysine 154 carries the post-translational modification N6-acetyllysine; alternate. Lysine 154 carries the N6-succinyllysine; alternate modification. Lysine 197 is subject to N6-acetyllysine. Lysine 270 carries the post-translational modification N6-succinyllysine.

It belongs to the ATPase gamma chain family. In terms of assembly, component of the ATP synthase complex composed at least of ATP5F1A/subunit alpha, ATP5F1B/subunit beta, ATP5MC1/subunit c (homooctomer), MT-ATP6/subunit a, MT-ATP8/subunit 8, ATP5ME/subunit e, ATP5MF/subunit f, ATP5MG/subunit g, ATP5MK/subunit k, ATP5MJ/subunit j, ATP5F1C/subunit gamma, ATP5F1D/subunit delta, ATP5F1E/subunit epsilon, ATP5PF/subunit F6, ATP5PB/subunit b, ATP5PD/subunit d, ATP5PO/subunit OSCP. ATP synthase complex consists of a soluble F(1) head domain (subunits alpha(3) and beta(3)) - the catalytic core - and a membrane F(0) domain - the membrane proton channel (subunits c, a, 8, e, f, g, k and j). These two domains are linked by a central stalk (subunits gamma, delta, and epsilon) rotating inside the F1 region and a stationary peripheral stalk (subunits F6, b, d, and OSCP). Interacts with FLVCR2; this interaction occurs in the absence of heme and is disrupted upon heme binding.

It localises to the mitochondrion inner membrane. Functionally, subunit gamma, of the mitochondrial membrane ATP synthase complex (F(1)F(0) ATP synthase or Complex V) that produces ATP from ADP in the presence of a proton gradient across the membrane which is generated by electron transport complexes of the respiratory chain. ATP synthase complex consist of a soluble F(1) head domain - the catalytic core - and a membrane F(1) domain - the membrane proton channel. These two domains are linked by a central stalk rotating inside the F(1) region and a stationary peripheral stalk. During catalysis, ATP synthesis in the catalytic domain of F(1) is coupled via a rotary mechanism of the central stalk subunits to proton translocation. In vivo, can only synthesize ATP although its ATP hydrolase activity can be activated artificially in vitro. With the central stalk subunit delta, is essential for the biogenesis of F(1) catalytic part of the ATP synthase complex namely in the formation of F1 assembly intermediate. The protein is ATP synthase F(1) complex subunit gamma, mitochondrial of Mus musculus (Mouse).